A 436-amino-acid polypeptide reads, in one-letter code: GTPase Der (436 aa).

2 EngA-type G domains span residues 3–168 (PLIA…PESD) and 177–352 (IRLA…DNRA). Residues 9-16 (GRPNVGKS), 56-60 (DTGGY), 120-123 (NKVE), 183-190 (GRPNVGKS), 230-234 (DTAGL), and 295-298 (NKWD) contribute to the GTP site. In terms of domain architecture, KH-like spans 353 to 436 (RKISTSALNR…VTISLRFLQK (84 aa)).

It belongs to the TRAFAC class TrmE-Era-EngA-EngB-Septin-like GTPase superfamily. EngA (Der) GTPase family. In terms of assembly, associates with the 50S ribosomal subunit.

Its function is as follows. GTPase that plays an essential role in the late steps of ribosome biogenesis. The sequence is that of GTPase Der from Chlorobium phaeovibrioides (strain DSM 265 / 1930) (Prosthecochloris vibrioformis (strain DSM 265)).